The chain runs to 423 residues: UDP-N-acetylglucosamine 1-carboxyvinyltransferase (423 aa).

Residue 21–22 (KN) participates in phosphoenolpyruvate binding. A UDP-N-acetyl-alpha-D-glucosamine-binding site is contributed by arginine 92. The active-site Proton donor is cysteine 116. A 2-(S-cysteinyl)pyruvic acid O-phosphothioketal modification is found at cysteine 116. UDP-N-acetyl-alpha-D-glucosamine is bound by residues aspartate 305 and valine 327.

Belongs to the EPSP synthase family. MurA subfamily.

The protein localises to the cytoplasm. It catalyses the reaction phosphoenolpyruvate + UDP-N-acetyl-alpha-D-glucosamine = UDP-N-acetyl-3-O-(1-carboxyvinyl)-alpha-D-glucosamine + phosphate. The protein operates within cell wall biogenesis; peptidoglycan biosynthesis. In terms of biological role, cell wall formation. Adds enolpyruvyl to UDP-N-acetylglucosamine. This chain is UDP-N-acetylglucosamine 1-carboxyvinyltransferase, found in Fervidobacterium nodosum (strain ATCC 35602 / DSM 5306 / Rt17-B1).